Here is a 208-residue protein sequence, read N- to C-terminus: ATP phosphoribosyltransferase (208 aa).

The protein belongs to the ATP phosphoribosyltransferase family. Short subfamily. Heteromultimer composed of HisG and HisZ subunits.

The protein localises to the cytoplasm. It catalyses the reaction 1-(5-phospho-beta-D-ribosyl)-ATP + diphosphate = 5-phospho-alpha-D-ribose 1-diphosphate + ATP. It participates in amino-acid biosynthesis; L-histidine biosynthesis; L-histidine from 5-phospho-alpha-D-ribose 1-diphosphate: step 1/9. In terms of biological role, catalyzes the condensation of ATP and 5-phosphoribose 1-diphosphate to form N'-(5'-phosphoribosyl)-ATP (PR-ATP). Has a crucial role in the pathway because the rate of histidine biosynthesis seems to be controlled primarily by regulation of HisG enzymatic activity. This Thermotoga petrophila (strain ATCC BAA-488 / DSM 13995 / JCM 10881 / RKU-1) protein is ATP phosphoribosyltransferase.